The chain runs to 317 residues: Transaldolase (317 aa).

Lys-132 functions as the Schiff-base intermediate with substrate in the catalytic mechanism.

It belongs to the transaldolase family. Type 1 subfamily.

It localises to the cytoplasm. It catalyses the reaction D-sedoheptulose 7-phosphate + D-glyceraldehyde 3-phosphate = D-erythrose 4-phosphate + beta-D-fructose 6-phosphate. Its pathway is carbohydrate degradation; pentose phosphate pathway; D-glyceraldehyde 3-phosphate and beta-D-fructose 6-phosphate from D-ribose 5-phosphate and D-xylulose 5-phosphate (non-oxidative stage): step 2/3. In terms of biological role, transaldolase is important for the balance of metabolites in the pentose-phosphate pathway. In Haemophilus influenzae (strain ATCC 51907 / DSM 11121 / KW20 / Rd), this protein is Transaldolase.